Consider the following 240-residue polypeptide: Phosphoribosylaminoimidazole-succinocarboxamide synthase (240 aa).

This sequence belongs to the SAICAR synthetase family.

It catalyses the reaction 5-amino-1-(5-phospho-D-ribosyl)imidazole-4-carboxylate + L-aspartate + ATP = (2S)-2-[5-amino-1-(5-phospho-beta-D-ribosyl)imidazole-4-carboxamido]succinate + ADP + phosphate + 2 H(+). The protein operates within purine metabolism; IMP biosynthesis via de novo pathway; 5-amino-1-(5-phospho-D-ribosyl)imidazole-4-carboxamide from 5-amino-1-(5-phospho-D-ribosyl)imidazole-4-carboxylate: step 1/2. This chain is Phosphoribosylaminoimidazole-succinocarboxamide synthase, found in Wolbachia sp. subsp. Drosophila simulans (strain wRi).